The sequence spans 359 residues: HTH-type transcriptional regulator Rv3575c (359 aa).

The 56-residue stretch at 9–64 (ATLASLAAELKVSRTTVSNAFNRPDQLSADLRERVLATAKRLGYAGPDPVARSLRT) folds into the HTH lacI-type domain. The H-T-H motif DNA-binding region spans 11–30 (LASLAAELKVSRTTVSNAFN).

Transcriptional regulator that negatively regulates transcription of the mce4 operon, which is involved in cholesterol transport and utilization. Acts by binding to the promoter region of the mce4 operon. It affects the utilization of host cholesterol as a carbon source, impacting the host's innate immune response. The sequence is that of HTH-type transcriptional regulator Rv3575c from Mycobacterium tuberculosis (strain ATCC 25618 / H37Rv).